A 380-amino-acid polypeptide reads, in one-letter code: Chaperone protein DnaJ (380 aa).

Residues 5-69 enclose the J domain; the sequence is DLYKVLGVEK…QKRAQYDQFG (65 aa). The CR-type zinc finger occupies 140 to 222; sequence GKKTTITYNR…CGGSGHTEQS (83 aa). Residues Cys153, Cys156, Cys170, Cys173, Cys196, Cys199, Cys210, and Cys213 each contribute to the Zn(2+) site. CXXCXGXG motif repeat units lie at residues 153–160, 170–177, 196–203, and 210–217; these read CETCGGSG, CSKCHGAG, CDVCHGTG, and CATCGGSG.

This sequence belongs to the DnaJ family. Homodimer. Requires Zn(2+) as cofactor.

Its subcellular location is the cytoplasm. In terms of biological role, participates actively in the response to hyperosmotic and heat shock by preventing the aggregation of stress-denatured proteins and by disaggregating proteins, also in an autonomous, DnaK-independent fashion. Unfolded proteins bind initially to DnaJ; upon interaction with the DnaJ-bound protein, DnaK hydrolyzes its bound ATP, resulting in the formation of a stable complex. GrpE releases ADP from DnaK; ATP binding to DnaK triggers the release of the substrate protein, thus completing the reaction cycle. Several rounds of ATP-dependent interactions between DnaJ, DnaK and GrpE are required for fully efficient folding. Also involved, together with DnaK and GrpE, in the DNA replication of plasmids through activation of initiation proteins. This is Chaperone protein DnaJ from Lactiplantibacillus plantarum (strain ATCC BAA-793 / NCIMB 8826 / WCFS1) (Lactobacillus plantarum).